The chain runs to 271 residues: uncharacterized protein (271 aa).

This sequence belongs to the HAD-like hydrolase superfamily.

This is an uncharacterized protein from Staphylococcus aureus (strain MRSA252).